The sequence spans 300 residues: Ribosomal protein bS6--L-glutamate ligase (300 aa).

In terms of domain architecture, ATP-grasp spans 104 to 287 (MQLLARQGID…IAGKMIRWIE (184 aa)). ATP contacts are provided by residues Lys-141, 178–179 (EY), Asp-187, and 211–213 (RSN). The Mg(2+) site is built by Asp-248, Glu-260, and Asn-262. 3 residues coordinate Mn(2+): Asp-248, Glu-260, and Asn-262.

The protein belongs to the RimK family. The cofactor is Mg(2+). Mn(2+) is required as a cofactor.

In terms of biological role, an L-glutamate ligase that catalyzes the ATP-dependent post-translational addition of glutamate residues to the C-terminus of ribosomal protein bS6 (RpsF). Is also able to catalyze the synthesis of poly-alpha-glutamate in vitro, via ATP hydrolysis from unprotected glutamate as substrate. The number of glutamate residues added to either RpsF or to poly-alpha-glutamate changes with pH. This chain is Ribosomal protein bS6--L-glutamate ligase, found in Escherichia fergusonii (strain ATCC 35469 / DSM 13698 / CCUG 18766 / IAM 14443 / JCM 21226 / LMG 7866 / NBRC 102419 / NCTC 12128 / CDC 0568-73).